Reading from the N-terminus, the 573-residue chain is Dilute domain-containing protein SPAC25B8.08 (573 aa).

The region spanning 180–464 (NAFLCEVNQV…LKKLDAFHEE (285 aa)) is the Dilute domain.

It is found in the cytoplasm. It localises to the golgi apparatus. This Schizosaccharomyces pombe (strain 972 / ATCC 24843) (Fission yeast) protein is Dilute domain-containing protein SPAC25B8.08.